A 121-amino-acid polypeptide reads, in one-letter code: RxLR effector protein PexRD2 (121 aa).

An N-terminal signal peptide occupies residues 1-18; it reads MRLSYVFVVFAASLLVTA. A RxLR-dEER motif is present at residues 38 to 56; the sequence is RLLRKHYTAAENDGDSEAR. Positions 57-121 are WY domain; sequence ALNPEKMKTM…LNYVAEHTAV (65 aa).

The protein belongs to the RxLR effector family.

The protein localises to the secreted. Its subcellular location is the host cytoplasm. It localises to the host nucleus. Its function is as follows. Secreted effector involved in P.mirabilis colonization of host plants. May perturb the signaling of cell death associated with plant immunity, via interaction with a host MAP kinase. This chain is RxLR effector protein PexRD2, found in Phytophthora mirabilis.